Consider the following 101-residue polypeptide: Ubiquitin-related modifier 1 (101 aa).

Position 101 is a 1-thioglycine (Gly-101). Gly-101 is covalently cross-linked (Glycyl lysine isopeptide (Gly-Lys) (interchain with K-? in acceptor proteins)).

It belongs to the URM1 family. Post-translationally, C-terminal thiocarboxylation occurs in 2 steps, it is first acyl-adenylated (-COAMP) via the hesA/moeB/thiF part of the MOCS3 homolog, then thiocarboxylated (-COSH) via the rhodanese domain of the MOCS3 homolog.

It is found in the cytoplasm. It functions in the pathway tRNA modification; 5-methoxycarbonylmethyl-2-thiouridine-tRNA biosynthesis. In terms of biological role, acts as a sulfur carrier required for 2-thiolation of mcm(5)S(2)U at tRNA wobble positions of cytosolic tRNA(Lys), tRNA(Glu) and tRNA(Gln). Serves as sulfur donor in tRNA 2-thiolation reaction by being thiocarboxylated (-COSH) at its C-terminus by MOCS3. The sulfur is then transferred to tRNA to form 2-thiolation of mcm(5)S(2)U. Also acts as a ubiquitin-like protein (UBL) that is covalently conjugated via an isopeptide bond to lysine residues of target proteins. The thiocarboxylated form serves as substrate for conjugation and oxidative stress specifically induces the formation of UBL-protein conjugates. This chain is Ubiquitin-related modifier 1, found in Gallus gallus (Chicken).